The primary structure comprises 82 residues: Translational regulator CsrA (82 aa).

This sequence belongs to the CsrA/RsmA family. In terms of assembly, homodimer; the beta-strands of each monomer intercalate to form a hydrophobic core, while the alpha-helices form wings that extend away from the core.

It is found in the cytoplasm. A translational regulator that binds mRNA to regulate translation initiation and/or mRNA stability. Usually binds in the 5'-UTR at or near the Shine-Dalgarno sequence preventing ribosome-binding, thus repressing translation. Its main target seems to be the major flagellin gene, while its function is anatagonized by FliW. This is Translational regulator CsrA from Brachyspira hyodysenteriae (strain ATCC 49526 / WA1).